The chain runs to 56 residues: Small ribosomal subunit protein uS14 (56 aa).

4 residues coordinate Zn(2+): C21, C24, C39, and C42.

This sequence belongs to the universal ribosomal protein uS14 family. Zinc-binding uS14 subfamily. Part of the 30S ribosomal subunit. Zn(2+) serves as cofactor.

Binds 16S rRNA, required for the assembly of 30S particles. The sequence is that of Small ribosomal subunit protein uS14 from Thermococcus kodakarensis (strain ATCC BAA-918 / JCM 12380 / KOD1) (Pyrococcus kodakaraensis (strain KOD1)).